We begin with the raw amino-acid sequence, 376 residues long: Enoyl-[acyl-carrier-protein] reductase, mitochondrial (376 aa).

A mitochondrion-targeting transit peptide spans 1 to 12 (MLRTLRTSQLAR). Y79 (proton donor) is an active-site residue. NADP(+)-binding positions include N160, 183–186 (NSGV), 206–208 (RDR), 277–280 (YGGM), 302–304 (YWL), and K368.

It belongs to the zinc-containing alcohol dehydrogenase family. Quinone oxidoreductase subfamily. Homodimer.

The protein resides in the mitochondrion matrix. It carries out the reaction a 2,3-saturated acyl-[ACP] + NADP(+) = a (2E)-enoyl-[ACP] + NADPH + H(+). Catalyzes the NADPH-dependent reduction of trans-2-enoyl thioesters in mitochondrial fatty acid synthesis (fatty acid synthesis type II). Fatty acid chain elongation in mitochondria uses acyl carrier protein (ACP) as an acyl group carrier, but the enzyme accepts both ACP and CoA thioesters as substrates in vitro. Required for respiration and the maintenance of the mitochondrial compartment. This Yarrowia lipolytica (strain CLIB 122 / E 150) (Yeast) protein is Enoyl-[acyl-carrier-protein] reductase, mitochondrial (ETR1).